A 270-amino-acid chain; its full sequence is tRNA pseudouridine synthase A (270 aa).

Asp54 serves as the catalytic Nucleophile. Tyr112 serves as a coordination point for substrate.

It belongs to the tRNA pseudouridine synthase TruA family. Homodimer.

It carries out the reaction uridine(38/39/40) in tRNA = pseudouridine(38/39/40) in tRNA. In terms of biological role, formation of pseudouridine at positions 38, 39 and 40 in the anticodon stem and loop of transfer RNAs. The chain is tRNA pseudouridine synthase A from Bordetella bronchiseptica (strain ATCC BAA-588 / NCTC 13252 / RB50) (Alcaligenes bronchisepticus).